The following is a 367-amino-acid chain: Chorismate synthase (367 aa).

Arginine 48 provides a ligand contact to NADP(+). Residues 125–127 (RSS), 238–239 (NA), glycine 278, 293–297 (KPTSS), and arginine 319 contribute to the FMN site.

It belongs to the chorismate synthase family. In terms of assembly, homotetramer. The cofactor is FMNH2.

It carries out the reaction 5-O-(1-carboxyvinyl)-3-phosphoshikimate = chorismate + phosphate. It participates in metabolic intermediate biosynthesis; chorismate biosynthesis; chorismate from D-erythrose 4-phosphate and phosphoenolpyruvate: step 7/7. Catalyzes the anti-1,4-elimination of the C-3 phosphate and the C-6 proR hydrogen from 5-enolpyruvylshikimate-3-phosphate (EPSP) to yield chorismate, which is the branch point compound that serves as the starting substrate for the three terminal pathways of aromatic amino acid biosynthesis. This reaction introduces a second double bond into the aromatic ring system. The polypeptide is Chorismate synthase (Halorhodospira halophila (strain DSM 244 / SL1) (Ectothiorhodospira halophila (strain DSM 244 / SL1))).